Here is a 142-residue protein sequence, read N- to C-terminus: HTH-type transcriptional regulator MntR (142 aa).

The HTH dtxR-type domain maps to 1-63 (MTTPSMEDYI…YEKYRGLVLT (63 aa)). Positions 8, 11, 77, 99, 102, and 103 each coordinate Mn(2+).

This sequence belongs to the DtxR/MntR family. In terms of assembly, homodimer.

It is found in the cytoplasm. With respect to regulation, DNA binding is strongly activated by Mn(2+). Central regulator of manganese homeostasis. The chain is HTH-type transcriptional regulator MntR from Bacillus velezensis (strain DSM 23117 / BGSC 10A6 / LMG 26770 / FZB42) (Bacillus amyloliquefaciens subsp. plantarum).